Consider the following 1844-residue polypeptide: Non-structural replication polyprotein (1844 aa).

The 162-residue stretch at 58–219 folds into the Alphavirus-like MT domain; sequence SGLGTSHHPH…NQPSDAHSWL (162 aa). The tract at residues 571–729 is disordered; it reads TAFLPFTPTT…APPTHPLPSS (159 aa). A compositionally biased stretch (low complexity) spans 609–621; it reads SSPGAQPPTTTAA. The region spanning 728-879 is the OTU domain; sequence SSQLLPAPLT…FSPGKRLLGS (152 aa). A Peptidase C21 domain is found at 730–884; sequence QLLPAPLTND…RLLGSQPSAK (155 aa). Cysteine 783 serves as the catalytic For protease activity. Positions 859-887 are disordered; sequence DITHTTGPPSHFSPGKRLLGSQPSAKGHP. The short motif at 865 to 867 is the GPP flap element; the sequence is GPP. Histidine 869 (for protease activity) is an active-site residue. One can recognise a (+)RNA virus helicase ATP-binding domain in the interval 946-1103; that stretch reads TGPTPKERII…RLLPYIDMYC (158 aa). 976 to 983 is an a ribonucleoside 5'-triphosphate binding site; it reads GFAGCGKT. The (+)RNA virus helicase C-terminal domain maps to 1104–1236; that stretch reads WWSYRIPQCI…SLIIMDRYFP (133 aa). Positions 1572 to 1678 constitute a RdRp catalytic domain; the sequence is TPKIANDYTA…DHPLPTRHDW (107 aa).

Belongs to the Tymoviridae non-structural replication polyprotein family. Interacts with host ubiquitin. Post-translationally, specific enzymatic cleavages by the host yield mature proteins.

Its subcellular location is the host chloroplast envelope. The enzyme catalyses Thiol-dependent hydrolysis of ester, thioester, amide, peptide and isopeptide bonds formed by the C-terminal Gly of ubiquitin (a 76-residue protein attached to proteins as an intracellular targeting signal).. It carries out the reaction RNA(n) + a ribonucleoside 5'-triphosphate = RNA(n+1) + diphosphate. Functionally, acts as a cysteine protease, methyltransferase and deubiquitinase. The cysteine protease activity cleaves the polyprotein giving rise to mature proteins. The protease has the ability to process substrates in trans. The methyltransferase domain is probably involved in viral RNA capping. The deubiquitylating activity counteracts the degradation of the viral polymerase mediated by the host ubiquitin-proteasome system. The polymerase is thus stabilized and infectivity is increased. Favors K63 poly-Ub linkage. Its function is as follows. RNA-directed RNA polymerase is responsible for the replication and transcription of the genome. This is Non-structural replication polyprotein from Brassica.